Here is a 295-residue protein sequence, read N- to C-terminus: ATP synthase gamma chain (295 aa).

Belongs to the ATPase gamma chain family. As to quaternary structure, F-type ATPases have 2 components, CF(1) - the catalytic core - and CF(0) - the membrane proton channel. CF(1) has five subunits: alpha(3), beta(3), gamma(1), delta(1), epsilon(1). CF(0) has three main subunits: a, b and c.

The protein resides in the cell membrane. Its function is as follows. Produces ATP from ADP in the presence of a proton gradient across the membrane. The gamma chain is believed to be important in regulating ATPase activity and the flow of protons through the CF(0) complex. This Herpetosiphon aurantiacus (strain ATCC 23779 / DSM 785 / 114-95) protein is ATP synthase gamma chain.